A 95-amino-acid chain; its full sequence is Small ribosomal subunit protein uS19 (95 aa).

The protein belongs to the universal ribosomal protein uS19 family.

Its function is as follows. Protein S19 forms a complex with S13 that binds strongly to the 16S ribosomal RNA. The sequence is that of Small ribosomal subunit protein uS19 from Thermotoga sp. (strain RQ2).